The primary structure comprises 515 residues: ATP synthase subunit alpha (515 aa).

Position 171–178 (171–178) interacts with ATP; it reads GDRQTGKT.

The protein belongs to the ATPase alpha/beta chains family. F-type ATPases have 2 components, CF(1) - the catalytic core - and CF(0) - the membrane proton channel. CF(1) has five subunits: alpha(3), beta(3), gamma(1), delta(1), epsilon(1). CF(0) has three main subunits: a(1), b(2) and c(9-12). The alpha and beta chains form an alternating ring which encloses part of the gamma chain. CF(1) is attached to CF(0) by a central stalk formed by the gamma and epsilon chains, while a peripheral stalk is formed by the delta and b chains.

The protein localises to the cell inner membrane. It carries out the reaction ATP + H2O + 4 H(+)(in) = ADP + phosphate + 5 H(+)(out). Functionally, produces ATP from ADP in the presence of a proton gradient across the membrane. The alpha chain is a regulatory subunit. The protein is ATP synthase subunit alpha of Coxiella burnetii (strain CbuK_Q154) (Coxiella burnetii (strain Q154)).